The chain runs to 598 residues: Protein HIGH CHLOROPHYLL FLUORESCENCE PHENOTYPE 173, chloroplastic (598 aa).

The transit peptide at 1–79 (MVGSIVGSNM…ITTKESEETV (79 aa)) directs the protein to the chloroplast. Positions 42 to 106 (VIPRAQSSSS…PTLKLDDVNP (65 aa)) are disordered. The span at 73 to 84 (KESEETVAKKLD) shows a compositional bias: basic and acidic residues. The segment covering 87-97 (PPSPQSPPSPP) has biased composition (pro residues).

The protein belongs to the NmrA-type oxidoreductase family. Component of a high molecular weight complex containing psbA mRNA, OHP1, OHP2 and HCF244, and PSII core proteins D1/D2, HCF136 and HCF173. Interacts with LPE1.

Its subcellular location is the plastid. The protein localises to the chloroplast membrane. It is found in the chloroplast thylakoid membrane. It localises to the chloroplast stroma. In terms of biological role, auxiliary factor required, together with HCF244, for the biogenesis of photosystem II (PSII), especially for the synthesis of the reaction center proteins (e.g. D1), via the regulation of the corresponding mRNA (e.g. psbA) translation initiation (ribosomal loading) and stabilization. This chain is Protein HIGH CHLOROPHYLL FLUORESCENCE PHENOTYPE 173, chloroplastic, found in Arabidopsis thaliana (Mouse-ear cress).